Here is a 214-residue protein sequence, read N- to C-terminus: Transcription factor 23 (214 aa).

Disordered stretches follow at residues 1-86 (MSQR…ARER) and 174-214 (DSTT…LGDK). A compositionally biased stretch (basic and acidic residues) spans 40-49 (TRQDPWEERS). The region spanning 76-128 (EASPENAARERSRVRTLRQAFLALQAALPAVPPDTKLSKLDVLVLAASYIAHL) is the bHLH domain. The span at 174–183 (DSTTASTPSQ) shows a compositional bias: polar residues.

As to quaternary structure, forms inactive heterodimeric complexes with TCF3. Expressed in liver, kidney and spleen.

Its subcellular location is the nucleus. Inhibits E-box-mediated binding and transactivation of bHLH factors. Inhibitory effect is similar to that of ID proteins. Inhibits the formation of TCF3 and MYOD1 homodimers and heterodimers. Lacks DNA binding activity. Seems to play a role in the inhibition of myogenesis. The sequence is that of Transcription factor 23 (TCF23) from Homo sapiens (Human).